The chain runs to 141 residues: HTH-type transcriptional repressor NsrR (141 aa).

The 128-residue stretch at Gln-2–Glu-129 folds into the HTH rrf2-type domain. Residues Ile-28–Arg-51 constitute a DNA-binding region (H-T-H motif). The [2Fe-2S] cluster site is built by Cys-91, Cys-96, and Cys-102.

Requires [2Fe-2S] cluster as cofactor.

In terms of biological role, nitric oxide-sensitive repressor of genes involved in protecting the cell against nitrosative stress. May require iron for activity. The sequence is that of HTH-type transcriptional repressor NsrR from Escherichia coli O157:H7 (strain EC4115 / EHEC).